Consider the following 396-residue polypeptide: Inositol polyphosphate 1-phosphatase (396 aa).

Li(+) is bound at residue Asp54. Residue Glu79 coordinates Mg(2+). Glu80 is a Li(+) binding site. Residues Asp153 and Ile155 each coordinate Mg(2+). 1D-myo-inositol 1,4-bisphosphate contacts are provided by Asp156, Ser157, Thr158, Ser264, Lys266, Gly286, Ala287, Lys290, and Thr308. Asp313 lines the Mg(2+) pocket. Ser314 carries the phosphoserine modification.

The protein belongs to the inositol monophosphatase superfamily. In terms of assembly, monomer. Requires Mg(2+) as cofactor.

It carries out the reaction 1D-myo-inositol 1,4-bisphosphate + H2O = 1D-myo-inositol 4-phosphate + phosphate. The enzyme catalyses 1D-myo-inositol 1,3,4-trisphosphate + H2O = 1D-myo-inositol 3,4-bisphosphate + phosphate. Its pathway is signal transduction; phosphatidylinositol signaling pathway. Its activity is regulated as follows. Inhibited by Li(+). Functionally, mg(2+)-dependent phosphatase that catalyzes the hydrolysis of the 1-position phosphate from inositol 1,4-bisphosphate and inositol 1,3,4-trisphosphate and participates in inositol phosphate metabolism. This is Inositol polyphosphate 1-phosphatase from Mus musculus (Mouse).